A 43-amino-acid chain; its full sequence is Protein PsbN (43 aa).

Residues 5–27 (NLVAIFVSCLLVSLTGYALYTSF) form a helical membrane-spanning segment.

The protein belongs to the PsbN family.

Its subcellular location is the plastid. The protein resides in the chloroplast thylakoid membrane. Its function is as follows. May play a role in photosystem I and II biogenesis. The chain is Protein PsbN from Ephedra sinica (Chinese ephedra).